We begin with the raw amino-acid sequence, 61 residues long: Small ribosomal subunit protein uS14 (61 aa).

Zn(2+)-binding residues include Cys24, Cys27, Cys40, and Cys43.

It belongs to the universal ribosomal protein uS14 family. Zinc-binding uS14 subfamily. In terms of assembly, part of the 30S ribosomal subunit. Contacts proteins S3 and S10. Requires Zn(2+) as cofactor.

Functionally, binds 16S rRNA, required for the assembly of 30S particles and may also be responsible for determining the conformation of the 16S rRNA at the A site. The polypeptide is Small ribosomal subunit protein uS14 (Thermoanaerobacter sp. (strain X514)).